The chain runs to 674 residues: tRNA 5-methylaminomethyl-2-thiouridine biosynthesis bifunctional protein MnmC (674 aa).

The tract at residues 1-237 (MLTSYQLESP…KREMTVGELN (237 aa)) is tRNA (mnm(5)s(2)U34)-methyltransferase. Positions 270 to 674 (VGAGLAGANT…IRDLKRSQIL (405 aa)) are FAD-dependent cmnm(5)s(2)U34 oxidoreductase.

In the N-terminal section; belongs to the methyltransferase superfamily. tRNA (mnm(5)s(2)U34)-methyltransferase family. This sequence in the C-terminal section; belongs to the DAO family. FAD serves as cofactor.

Its subcellular location is the cytoplasm. It catalyses the reaction 5-aminomethyl-2-thiouridine(34) in tRNA + S-adenosyl-L-methionine = 5-methylaminomethyl-2-thiouridine(34) in tRNA + S-adenosyl-L-homocysteine + H(+). In terms of biological role, catalyzes the last two steps in the biosynthesis of 5-methylaminomethyl-2-thiouridine (mnm(5)s(2)U) at the wobble position (U34) in tRNA. Catalyzes the FAD-dependent demodification of cmnm(5)s(2)U34 to nm(5)s(2)U34, followed by the transfer of a methyl group from S-adenosyl-L-methionine to nm(5)s(2)U34, to form mnm(5)s(2)U34. The polypeptide is tRNA 5-methylaminomethyl-2-thiouridine biosynthesis bifunctional protein MnmC (Marinomonas sp. (strain MWYL1)).